A 130-amino-acid polypeptide reads, in one-letter code: uncharacterized protein (130 aa).

The interval 23-130 (SHLRLLPTAN…GAHQLSSPSS (108 aa)) is disordered. Over residues 30–45 (TANSPSGSNQPTNPNR) the composition is skewed to polar residues.

This is an uncharacterized protein from Homo sapiens (Human).